An 840-amino-acid chain; its full sequence is DNA helicase MCM8 (840 aa).

The disordered stretch occupies residues 16–54; that stretch reads QSWKRGRGGGNFSGKWREREHRPDLSKTTGKRTSEQTPQ. The span at 30–40 shows a compositional bias: basic and acidic residues; the sequence is KWREREHRPDL. Positions 402-609 constitute an MCM domain; the sequence is LFKLIVNSLC…HHDHLLSEHV (208 aa). Residue 454 to 461 coordinates ATP; sequence GDPGLGKS. A Phosphoserine modification is found at Ser630.

The protein belongs to the MCM family. In terms of assembly, component of the MCM8-MCM9 complex, which forms a hexamer composed of MCM8 and MCM9. Interacts with the DNA mismatch repair (MMR) complex composed at least of MSH2, MSH3, MSH6, PMS1 and MLH1. Interacts with RAD51; the interaction recruits RAD51 to DNA damage sites. Interacts with the MRN complex composed of MRE11, RAD50 and NBN/NBS1. Interacts with CDC6 and ORC2. Interacts with HROB; the interaction recruits the MCM8-MCM9 complex to DNA damage sites. As to expression, highest levels in placenta, lung and pancreas. Low levels in skeletal muscle and kidney. Expressed in various tumors with highest levels in colon and lung cancers.

The protein localises to the nucleus. Its subcellular location is the chromosome. It carries out the reaction ATP + H2O = ADP + phosphate + H(+). Functionally, component of the MCM8-MCM9 complex, a complex involved in the repair of double-stranded DNA breaks (DBSs) and DNA interstrand cross-links (ICLs) by homologous recombination (HR). Required for DNA resection by the MRE11-RAD50-NBN/NBS1 (MRN) complex by recruiting the MRN complex to the repair site and by promoting the complex nuclease activity. Probably by regulating the localization of the MNR complex, indirectly regulates the recruitment of downstream effector RAD51 to DNA damage sites including DBSs and ICLs. The MCM8-MCM9 complex is dispensable for DNA replication and S phase progression. However, may play a non-essential for DNA replication: may be involved in the activation of the prereplicative complex (pre-RC) during G(1) phase by recruiting CDC6 to the origin recognition complex (ORC). Probably by regulating HR, plays a key role during gametogenesis. Stabilizes MCM9 protein. This Homo sapiens (Human) protein is DNA helicase MCM8 (MCM8).